We begin with the raw amino-acid sequence, 944 residues long: Protein translocase subunit SecA (944 aa).

ATP contacts are provided by residues Gln96, 114–118 (GEGKT), and Asp554.

Belongs to the SecA family. In terms of assembly, monomer and homodimer. Part of the essential Sec protein translocation apparatus which comprises SecA, SecYEG and auxiliary proteins SecDF. Other proteins may also be involved.

The protein localises to the cell inner membrane. It localises to the cytoplasm. It catalyses the reaction ATP + H2O + cellular proteinSide 1 = ADP + phosphate + cellular proteinSide 2.. In terms of biological role, part of the Sec protein translocase complex. Interacts with the SecYEG preprotein conducting channel. Has a central role in coupling the hydrolysis of ATP to the transfer of proteins into and across the cell membrane, serving as an ATP-driven molecular motor driving the stepwise translocation of polypeptide chains across the membrane. The polypeptide is Protein translocase subunit SecA (Hydrogenobaculum sp. (strain Y04AAS1)).